The primary structure comprises 203 residues: Small ribosomal subunit protein uS7 (203 aa).

Positions 1-22 are disordered; the sequence is MSESEAPEPDQPAGAEEATGAK.

The protein belongs to the universal ribosomal protein uS7 family. In terms of assembly, part of the 30S ribosomal subunit.

Functionally, one of the primary rRNA binding proteins, it binds directly to 16S rRNA where it nucleates assembly of the head domain of the 30S subunit. Is located at the subunit interface close to the decoding center. The sequence is that of Small ribosomal subunit protein uS7 from Halococcus morrhuae (Micrococcus morrhuae).